We begin with the raw amino-acid sequence, 231 residues long: NDR1/HIN1-like protein 3 (231 aa).

The helical transmembrane segment at 47-67 (VIFNILITIAVLLGIAALIIW) threads the bilayer. 4 N-linked (GlcNAc...) asparagine glycosylation sites follow: Asn-102, Asn-135, Asn-145, and Asn-215.

In terms of assembly, may form oligomers or be a component of larger protein complex in plasma membranes. Glycosylated. Expressed in roots, young and senescing leaves, cauline leaves, stems and siliques.

It is found in the cell membrane. Its function is as follows. Confers resistance to Pseudomonas syringae pv. tomato DC3000 (Pst DC3000). In Arabidopsis thaliana (Mouse-ear cress), this protein is NDR1/HIN1-like protein 3.